A 158-amino-acid chain; its full sequence is SsrA-binding protein (158 aa).

A disordered region spans residues 131–158; it reads KQLHDKRQTEKERDWNKQKQRILQTNQR. The segment covering 132-147 has biased composition (basic and acidic residues); that stretch reads QLHDKRQTEKERDWNK.

This sequence belongs to the SmpB family.

It is found in the cytoplasm. Its function is as follows. Required for rescue of stalled ribosomes mediated by trans-translation. Binds to transfer-messenger RNA (tmRNA), required for stable association of tmRNA with ribosomes. tmRNA and SmpB together mimic tRNA shape, replacing the anticodon stem-loop with SmpB. tmRNA is encoded by the ssrA gene; the 2 termini fold to resemble tRNA(Ala) and it encodes a 'tag peptide', a short internal open reading frame. During trans-translation Ala-aminoacylated tmRNA acts like a tRNA, entering the A-site of stalled ribosomes, displacing the stalled mRNA. The ribosome then switches to translate the ORF on the tmRNA; the nascent peptide is terminated with the 'tag peptide' encoded by the tmRNA and targeted for degradation. The ribosome is freed to recommence translation, which seems to be the essential function of trans-translation. This is SsrA-binding protein from Teredinibacter turnerae (strain ATCC 39867 / T7901).